Reading from the N-terminus, the 245-residue chain is Phycocyanobilin:ferredoxin oxidoreductase (245 aa).

This sequence belongs to the HY2 family.

The enzyme catalyses (2R,3Z)-phycocyanobilin + 4 oxidized [2Fe-2S]-[ferredoxin] = biliverdin IXalpha + 4 reduced [2Fe-2S]-[ferredoxin] + 4 H(+). Its function is as follows. Catalyzes the four-electron reduction of biliverdin IX-alpha (2-electron reduction at both the A and D rings); the reaction proceeds via an isolatable 2-electron intermediate, 181,182-dihydrobiliverdin. The polypeptide is Phycocyanobilin:ferredoxin oxidoreductase (Trichormus variabilis (strain ATCC 29413 / PCC 7937) (Anabaena variabilis)).